Reading from the N-terminus, the 472-residue chain is 4-aminobutyrate aminotransferase (472 aa).

A pyridoxal 5'-phosphate-binding site is contributed by 135–136; sequence GA. Position 193 (Arg193) interacts with substrate. N6-(pyridoxal phosphate)lysine is present on Lys327. Position 352 (Thr352) interacts with pyridoxal 5'-phosphate.

This sequence belongs to the class-III pyridoxal-phosphate-dependent aminotransferase family. Homodimer and homotetramer. Requires pyridoxal 5'-phosphate as cofactor.

It localises to the cytoplasm. The enzyme catalyses 4-aminobutanoate + 2-oxoglutarate = succinate semialdehyde + L-glutamate. Its pathway is amino-acid degradation; L-arginine degradation. Its function is as follows. Required for the degradation of gamma-aminobutyric acid (GABA), which is important for utilization of GABA as nitrogen source and for oxidative stress tolerance. Deaminates GABA to succinate semialdehyde, which in turn is converted to succinate by the succinate-semialdehyde dehydrogenase UGA2. May be involved in an alternative, arginase-independent arginine degradation pathway via GABA. The protein is 4-aminobutyrate aminotransferase of Kluyveromyces lactis (strain ATCC 8585 / CBS 2359 / DSM 70799 / NBRC 1267 / NRRL Y-1140 / WM37) (Yeast).